A 419-amino-acid polypeptide reads, in one-letter code: Tol-Pal system protein TolB (419 aa).

A signal peptide spans 1 to 17 (MRFIGLVLLLLSVKLFG).

It belongs to the TolB family. The Tol-Pal system is composed of five core proteins: the inner membrane proteins TolA, TolQ and TolR, the periplasmic protein TolB and the outer membrane protein Pal. They form a network linking the inner and outer membranes and the peptidoglycan layer.

Its subcellular location is the periplasm. In terms of biological role, part of the Tol-Pal system, which plays a role in outer membrane invagination during cell division and is important for maintaining outer membrane integrity. The polypeptide is Tol-Pal system protein TolB (Helicobacter hepaticus (strain ATCC 51449 / 3B1)).